The chain runs to 732 residues: Prolyl tripeptidyl peptidase (732 aa).

Residues 1–24 form the signal peptide; sequence MKKTIFQQLFLSVCALTVALPCSA. Residues S603, D678, and H710 each act as charge relay system in the active site.

This sequence belongs to the peptidase S9B family.

It catalyses the reaction Hydrolysis of Xaa-Xaa-Pro-|-Yaa- releasing the N-terminal tripeptide of a peptide with Pro as the third residue (position P1) and where Yaa is not proline.. Functionally, serine proteinase. Releases tripeptides from the free amino terminus of proteins. Has a requirement for Pro in the P1 position, but is inactivated by Pro in the P1' position. This is Prolyl tripeptidyl peptidase from Porphyromonas gingivalis (strain ATCC 33277 / DSM 20709 / CIP 103683 / JCM 12257 / NCTC 11834 / 2561).